We begin with the raw amino-acid sequence, 493 residues long: Homeobox protein abdominal-B (493 aa).

Positions Met-1–Gln-29 are enriched in low complexity. Disordered stretches follow at residues Met-1–Gln-199, Ala-322–Ala-360, and Arg-438–Gly-475. Residues Gln-30 to Leu-39 show a composition bias toward basic residues. Composition is skewed to low complexity over residues Pro-54–Val-95 and Leu-105–Ala-134. A compositionally biased stretch (polar residues) spans Pro-144–Ala-153. Residues Gln-154 to Pro-173 show a composition bias toward low complexity. A compositionally biased stretch (polar residues) spans Asn-174 to Leu-184. Low complexity predominate over residues Glu-329–Gly-345. Positions Val-387–Ser-446 form a DNA-binding region, homeobox. Residues Gln-447–Gly-475 are compositionally biased toward low complexity.

The protein belongs to the Abd-B homeobox family. In terms of tissue distribution, isoform M and isoform R are expressed in ectodermal and mesodermal tissues and central nervous system of fourth to ninth embryonic abdominal segments. Later in embryogenesis, expression is seen in visceral mesoderm surrounding hindgut and in two Malpighian tubules.

The protein resides in the nucleus. Its function is as follows. Sequence-specific transcription factor which is part of a developmental regulatory system that provides cells with specific positional identities on the anterior-posterior axis. The sequence is that of Homeobox protein abdominal-B (Abd-B) from Drosophila melanogaster (Fruit fly).